The primary structure comprises 450 residues: Pancreatic triacylglycerol lipase (450 aa).

Disulfide bonds link Cys-4–Cys-10, Cys-91–Cys-102, and Cys-91–Cys-104. The Nucleophile role is filled by Ser-153. A glycan (N-linked (GlcNAc...) asparagine) is linked at Asn-167. The Charge relay system role is filled by Asp-177. 4 residues coordinate Ca(2+): Glu-188, Arg-191, Asp-193, and Asp-196. An intrachain disulfide couples Cys-238 to Cys-262. His-264 functions as the Charge relay system in the catalytic mechanism. 3 disulfide bridges follow: Cys-286-Cys-297, Cys-300-Cys-305, and Cys-434-Cys-450. In terms of domain architecture, PLAT spans 339 to 450 (WRYKVSVTLS…EEVLLTLNPC (112 aa)).

The protein belongs to the AB hydrolase superfamily. Lipase family. As to quaternary structure, forms a 1:1 stoichiometric complex with (pro)colipase/CLPS.

It is found in the secreted. The catalysed reaction is a triacylglycerol + H2O = a diacylglycerol + a fatty acid + H(+). It carries out the reaction 1,2,3-tributanoylglycerol + H2O = dibutanoylglycerol + butanoate + H(+). The enzyme catalyses 1,2,3-tri-(9Z-octadecenoyl)-glycerol + H2O = di-(9Z)-octadecenoylglycerol + (9Z)-octadecenoate + H(+). It catalyses the reaction all-trans-retinyl hexadecanoate + H2O = all-trans-retinol + hexadecanoate + H(+). The catalysed reaction is 1,2-di-(9Z-octadecenoyl)-glycerol + H2O = (9Z-octadecenoyl)-glycerol + (9Z)-octadecenoate + H(+). Its activity is regulated as follows. Inhibited by bile salts, is reactivated by (pro)colipase/CLPS. Functionally, plays an important role in fat metabolism. It preferentially splits the esters of long-chain fatty acids at positions 1 and 3, producing mainly 2-monoacylglycerol and free fatty acids, and shows considerably higher activity against insoluble emulsified substrates than against soluble ones. This Sus scrofa (Pig) protein is Pancreatic triacylglycerol lipase (PNLIP).